A 207-amino-acid chain; its full sequence is Ribosomal RNA small subunit methyltransferase G (207 aa).

S-adenosyl-L-methionine contacts are provided by residues Gly-73, Leu-78, 124–125 (VE), and Arg-139.

It belongs to the methyltransferase superfamily. RNA methyltransferase RsmG family.

It localises to the cytoplasm. It carries out the reaction guanosine(527) in 16S rRNA + S-adenosyl-L-methionine = N(7)-methylguanosine(527) in 16S rRNA + S-adenosyl-L-homocysteine. In terms of biological role, specifically methylates the N7 position of guanine in position 527 of 16S rRNA. The polypeptide is Ribosomal RNA small subunit methyltransferase G (Salmonella choleraesuis (strain SC-B67)).